The sequence spans 158 residues: Nuclear cap-binding protein subunit 2 (158 aa).

MRNA contacts are provided by residues tyrosine 17, tyrosine 40, 109 to 113 (RADWD), 120 to 124 (RQYGR), and 130 to 131 (QV). Positions 37–115 (CTLYVGNLSY…RVIRADWDAG (79 aa)) constitute an RRM domain. Residues 123-158 (GRGKHGGQVRDEYRKDYDPERGGYNRAIAQKGGDRQ) are disordered. The segment covering 130 to 145 (QVRDEYRKDYDPERGG) has biased composition (basic and acidic residues).

This sequence belongs to the RRM NCBP2 family. In terms of assembly, component of the nuclear cap-binding complex (CBC), a heterodimer composed of ncbp-1 and ncbp-2 that interacts with m7GpppG-capped RNA.

It localises to the nucleus. Its function is as follows. Component of the cap-binding complex (CBC), which binds co-transcriptionally to the 5' cap of pre-mRNAs and is involved in various processes such as pre-mRNA splicing and RNA-mediated gene silencing (RNAi). The CBC complex is involved in miRNA-mediated RNA interference and is required for primary microRNAs (miRNAs) processing. In the CBC complex, ncbp-2 recognizes and binds capped RNAs (m7GpppG-capped RNA) but requires ncbp-1 to stabilize the movement of its N-terminal loop and lock the CBC into a high affinity cap-binding state with the cap structure. The protein is Nuclear cap-binding protein subunit 2 (ncbp-2) of Caenorhabditis elegans.